The chain runs to 642 residues: Threonine--tRNA ligase (642 aa).

Residues 1–61 (MPVIRFYDGS…REDAFIEFVD (61 aa)) enclose the TGS domain. The catalytic stretch occupies residues 243 to 534 (DHRKIGKFLQ…LIEECSGNLP (292 aa)). Residues C334, H385, and H511 each coordinate Zn(2+).

Belongs to the class-II aminoacyl-tRNA synthetase family. Homodimer. The cofactor is Zn(2+).

Its subcellular location is the cytoplasm. The catalysed reaction is tRNA(Thr) + L-threonine + ATP = L-threonyl-tRNA(Thr) + AMP + diphosphate + H(+). In terms of biological role, catalyzes the attachment of threonine to tRNA(Thr) in a two-step reaction: L-threonine is first activated by ATP to form Thr-AMP and then transferred to the acceptor end of tRNA(Thr). Also edits incorrectly charged L-seryl-tRNA(Thr). The polypeptide is Threonine--tRNA ligase (Buchnera aphidicola subsp. Acyrthosiphon pisum (strain APS) (Acyrthosiphon pisum symbiotic bacterium)).